We begin with the raw amino-acid sequence, 330 residues long: Methionyl-tRNA formyltransferase (330 aa).

A (6S)-5,6,7,8-tetrahydrofolate-binding site is contributed by 121-124; that stretch reads SLLP.

It belongs to the Fmt family.

It catalyses the reaction L-methionyl-tRNA(fMet) + (6R)-10-formyltetrahydrofolate = N-formyl-L-methionyl-tRNA(fMet) + (6S)-5,6,7,8-tetrahydrofolate + H(+). Its function is as follows. Attaches a formyl group to the free amino group of methionyl-tRNA(fMet). The formyl group appears to play a dual role in the initiator identity of N-formylmethionyl-tRNA by promoting its recognition by IF2 and preventing the misappropriation of this tRNA by the elongation apparatus. The sequence is that of Methionyl-tRNA formyltransferase from Burkholderia cenocepacia (strain ATCC BAA-245 / DSM 16553 / LMG 16656 / NCTC 13227 / J2315 / CF5610) (Burkholderia cepacia (strain J2315)).